Reading from the N-terminus, the 389-residue chain is Phosphopentomutase (389 aa).

Residues Asp12, Asp284, His289, Asp325, His326, and His337 each coordinate Mn(2+).

Belongs to the phosphopentomutase family. Mn(2+) is required as a cofactor.

Its subcellular location is the cytoplasm. It carries out the reaction 2-deoxy-alpha-D-ribose 1-phosphate = 2-deoxy-D-ribose 5-phosphate. The catalysed reaction is alpha-D-ribose 1-phosphate = D-ribose 5-phosphate. The protein operates within carbohydrate degradation; 2-deoxy-D-ribose 1-phosphate degradation; D-glyceraldehyde 3-phosphate and acetaldehyde from 2-deoxy-alpha-D-ribose 1-phosphate: step 1/2. Its function is as follows. Isomerase that catalyzes the conversion of deoxy-ribose 1-phosphate (dRib-1-P) and ribose 1-phosphate (Rib-1-P) to deoxy-ribose 5-phosphate (dRib-5-P) and ribose 5-phosphate (Rib-5-P), respectively. The polypeptide is Phosphopentomutase (Anaeromyxobacter sp. (strain Fw109-5)).